Consider the following 539-residue polypeptide: CTP synthase (539 aa).

The amidoligase domain stretch occupies residues 1-268; that stretch reads MADTKYIFVT…DETVLRKVGL (268 aa). A CTP-binding site is contributed by S15. UTP is bound at residue S15. 16–21 serves as a coordination point for ATP; the sequence is SLGKGI. Residue Y56 coordinates L-glutamine. An ATP-binding site is contributed by D73. Residues D73 and E143 each contribute to the Mg(2+) site. CTP-binding positions include 150-152, 189-194, and K225; these read DIE and KTKPTQ. UTP contacts are provided by residues 189 to 194 and K225; that span reads KTKPTQ. The 243-residue stretch at 294-536 folds into the Glutamine amidotransferase type-1 domain; it reads TIALVGKYVE…IREAIKTRKK (243 aa). G356 is an L-glutamine binding site. The Nucleophile; for glutamine hydrolysis role is filled by C383. Residues 384–387, E407, and R464 each bind L-glutamine; that span reads LGMQ. Catalysis depends on residues H509 and E511.

It belongs to the CTP synthase family. As to quaternary structure, homotetramer.

It carries out the reaction UTP + L-glutamine + ATP + H2O = CTP + L-glutamate + ADP + phosphate + 2 H(+). The catalysed reaction is L-glutamine + H2O = L-glutamate + NH4(+). The enzyme catalyses UTP + NH4(+) + ATP = CTP + ADP + phosphate + 2 H(+). Its pathway is pyrimidine metabolism; CTP biosynthesis via de novo pathway; CTP from UDP: step 2/2. Allosterically activated by GTP, when glutamine is the substrate; GTP has no effect on the reaction when ammonia is the substrate. The allosteric effector GTP functions by stabilizing the protein conformation that binds the tetrahedral intermediate(s) formed during glutamine hydrolysis. Inhibited by the product CTP, via allosteric rather than competitive inhibition. In terms of biological role, catalyzes the ATP-dependent amination of UTP to CTP with either L-glutamine or ammonia as the source of nitrogen. Regulates intracellular CTP levels through interactions with the four ribonucleotide triphosphates. The sequence is that of CTP synthase from Porphyromonas gingivalis (strain ATCC BAA-308 / W83).